Consider the following 352-residue polypeptide: S-adenosylmethionine:tRNA ribosyltransferase-isomerase (352 aa).

It belongs to the QueA family. In terms of assembly, monomer.

The protein localises to the cytoplasm. The catalysed reaction is 7-aminomethyl-7-carbaguanosine(34) in tRNA + S-adenosyl-L-methionine = epoxyqueuosine(34) in tRNA + adenine + L-methionine + 2 H(+). The protein operates within tRNA modification; tRNA-queuosine biosynthesis. Its function is as follows. Transfers and isomerizes the ribose moiety from AdoMet to the 7-aminomethyl group of 7-deazaguanine (preQ1-tRNA) to give epoxyqueuosine (oQ-tRNA). The chain is S-adenosylmethionine:tRNA ribosyltransferase-isomerase from Vibrio cholerae serotype O1 (strain ATCC 39541 / Classical Ogawa 395 / O395).